The chain runs to 237 residues: uncharacterized protein (237 aa).

The region spanning 3 to 116 is the Response regulatory domain; sequence RILLVEDDER…VVMAKIKSVL (114 aa). A 4-aspartylphosphate modification is found at aspartate 52. A DNA-binding region (ompR/PhoB-type) is located at residues 131–229; the sequence is SRIVELGGLT…IRGQGYQFQV (99 aa).

In terms of processing, phosphorylated by YvcQ.

The protein localises to the cytoplasm. Member of the two-component regulatory system YvcQ/YvcP. This is an uncharacterized protein from Bacillus subtilis (strain 168).